Reading from the N-terminus, the 86-residue chain is Cytochrome c oxidase subunit 3 (86 aa).

Over 1-15 (MAHQAHSYHMVDPSP) the chain is Mitochondrial matrix. Residues 16–34 (WPIFGAAAALLTTSGLVMW) form a helical membrane-spanning segment. Residues 35 to 40 (FHYNSS) are Mitochondrial intermembrane-facing. Residues 41–66 (ILLAAGLLSMLLVMLQWWREIVREST) form a helical membrane-spanning segment. The Mitochondrial matrix segment spans residues 67–86 (FQGHHTPTVQKGLRYGMILF).

Belongs to the cytochrome c oxidase subunit 3 family. Component of the cytochrome c oxidase (complex IV, CIV), a multisubunit enzyme composed of 14 subunits. The complex is composed of a catalytic core of 3 subunits MT-CO1, MT-CO2 and MT-CO3, encoded in the mitochondrial DNA, and 11 supernumerary subunits COX4I, COX5A, COX5B, COX6A, COX6B, COX6C, COX7A, COX7B, COX7C, COX8 and NDUFA4, which are encoded in the nuclear genome. The complex exists as a monomer or a dimer and forms supercomplexes (SCs) in the inner mitochondrial membrane with NADH-ubiquinone oxidoreductase (complex I, CI) and ubiquinol-cytochrome c oxidoreductase (cytochrome b-c1 complex, complex III, CIII), resulting in different assemblies (supercomplex SCI(1)III(2)IV(1) and megacomplex MCI(2)III(2)IV(2)).

Its subcellular location is the mitochondrion inner membrane. The enzyme catalyses 4 Fe(II)-[cytochrome c] + O2 + 8 H(+)(in) = 4 Fe(III)-[cytochrome c] + 2 H2O + 4 H(+)(out). Component of the cytochrome c oxidase, the last enzyme in the mitochondrial electron transport chain which drives oxidative phosphorylation. The respiratory chain contains 3 multisubunit complexes succinate dehydrogenase (complex II, CII), ubiquinol-cytochrome c oxidoreductase (cytochrome b-c1 complex, complex III, CIII) and cytochrome c oxidase (complex IV, CIV), that cooperate to transfer electrons derived from NADH and succinate to molecular oxygen, creating an electrochemical gradient over the inner membrane that drives transmembrane transport and the ATP synthase. Cytochrome c oxidase is the component of the respiratory chain that catalyzes the reduction of oxygen to water. Electrons originating from reduced cytochrome c in the intermembrane space (IMS) are transferred via the dinuclear copper A center (CU(A)) of subunit 2 and heme A of subunit 1 to the active site in subunit 1, a binuclear center (BNC) formed by heme A3 and copper B (CU(B)). The BNC reduces molecular oxygen to 2 water molecules using 4 electrons from cytochrome c in the IMS and 4 protons from the mitochondrial matrix. In Anas platyrhynchos (Mallard), this protein is Cytochrome c oxidase subunit 3 (MT-CO3).